The following is a 366-amino-acid chain: NAD(P)H-quinone oxidoreductase subunit 1, chloroplastic (366 aa).

Transmembrane regions (helical) follow at residues 29 to 49 (WITA…LVIV), 97 to 117 (LLFS…YLVI), 130 to 150 (IGVF…FMAG), 166 to 186 (VAQA…ISLL), 202 to 222 (FGFW…FLIA), 254 to 274 (FGLF…FVTV), 307 to 327 (VIIG…ISIV), and 340 to 360 (LLNL…LLTA).

The protein belongs to the complex I subunit 1 family. As to quaternary structure, NDH is composed of at least 16 different subunits, 5 of which are encoded in the nucleus.

The protein resides in the plastid. It is found in the chloroplast thylakoid membrane. The enzyme catalyses a plastoquinone + NADH + (n+1) H(+)(in) = a plastoquinol + NAD(+) + n H(+)(out). It catalyses the reaction a plastoquinone + NADPH + (n+1) H(+)(in) = a plastoquinol + NADP(+) + n H(+)(out). NDH shuttles electrons from NAD(P)H:plastoquinone, via FMN and iron-sulfur (Fe-S) centers, to quinones in the photosynthetic chain and possibly in a chloroplast respiratory chain. The immediate electron acceptor for the enzyme in this species is believed to be plastoquinone. Couples the redox reaction to proton translocation, and thus conserves the redox energy in a proton gradient. This is NAD(P)H-quinone oxidoreductase subunit 1, chloroplastic from Anthoceros angustus (Hornwort).